Reading from the N-terminus, the 353-residue chain is MVGDTLKLLSPLMTRYFFLLFYSTDSSDLNENQHPLDFDEMAFGKVKSGISFLIQTGVGILGNSFLLCFYNLILFTGHKLRPTDLILSQLALANSMVLFFKGIPQTMAAFGLKYLLNDTGCKFVFYYHRVGTRVSLSTICLLNGFQAIKLNPSICRWMEIKIRSPRFIDFCCLLCWAPHVLMNASVLLLVNGPLNSKNSSAKNNYGYCSYKASKRFSSLHAVLYFSPDFMSLGFMVWASGSMVFFLYRHKQQVQHNHSNRLSCRPSQEARATHTIMVLVSSFFVFYSVHSFLTIWTTVVANPGQWIVTNSVLVASCFPARSPFVLIMSDTHISQFCFACRTRKTLFPNLVVMP.

Residues 1-56 (MVGDTLKLLSPLMTRYFFLLFYSTDSSDLNENQHPLDFDEMAFGKVKSGISFLIQT) are Extracellular-facing. A helical membrane pass occupies residues 57–77 (GVGILGNSFLLCFYNLILFTG). Residues 78–84 (HKLRPTD) lie on the Cytoplasmic side of the membrane. Residues 85–105 (LILSQLALANSMVLFFKGIPQ) form a helical membrane-spanning segment. Topologically, residues 106–132 (TMAAFGLKYLLNDTGCKFVFYYHRVGT) are extracellular. A glycan (N-linked (GlcNAc...) asparagine) is linked at Asn117. Residues 133 to 153 (RVSLSTICLLNGFQAIKLNPS) traverse the membrane as a helical segment. At 154 to 169 (ICRWMEIKIRSPRFID) the chain is on the cytoplasmic side. A helical membrane pass occupies residues 170-190 (FCCLLCWAPHVLMNASVLLLV). Topologically, residues 191-226 (NGPLNSKNSSAKNNYGYCSYKASKRFSSLHAVLYFS) are extracellular. Asn198 is a glycosylation site (N-linked (GlcNAc...) asparagine). A helical membrane pass occupies residues 227 to 247 (PDFMSLGFMVWASGSMVFFLY). The Cytoplasmic portion of the chain corresponds to 248–274 (RHKQQVQHNHSNRLSCRPSQEARATHT). A helical membrane pass occupies residues 275-295 (IMVLVSSFFVFYSVHSFLTIW). Topologically, residues 296–303 (TTVVANPG) are extracellular. Residues 304 to 324 (QWIVTNSVLVASCFPARSPFV) form a helical membrane-spanning segment. The Cytoplasmic portion of the chain corresponds to 325-353 (LIMSDTHISQFCFACRTRKTLFPNLVVMP).

The protein belongs to the G-protein coupled receptor 1 family. Expressed in the olfactory mucosa, very low expression in brain, lung and kidney.

The protein localises to the cell membrane. Functionally, putative pheromone receptor. This Homo sapiens (Human) protein is Vomeronasal type-1 receptor 1 (VN1R1).